A 235-amino-acid polypeptide reads, in one-letter code: Aspartate/glutamate leucyltransferase (235 aa).

The protein belongs to the R-transferase family. Bpt subfamily.

The protein resides in the cytoplasm. The enzyme catalyses N-terminal L-glutamyl-[protein] + L-leucyl-tRNA(Leu) = N-terminal L-leucyl-L-glutamyl-[protein] + tRNA(Leu) + H(+). It catalyses the reaction N-terminal L-aspartyl-[protein] + L-leucyl-tRNA(Leu) = N-terminal L-leucyl-L-aspartyl-[protein] + tRNA(Leu) + H(+). In terms of biological role, functions in the N-end rule pathway of protein degradation where it conjugates Leu from its aminoacyl-tRNA to the N-termini of proteins containing an N-terminal aspartate or glutamate. The chain is Aspartate/glutamate leucyltransferase from Pseudomonas syringae pv. syringae (strain B728a).